The chain runs to 134 residues: Small ribosomal subunit protein uS8c (134 aa).

In terms of assembly, component of the chloroplast small ribosomal subunit (SSU). Mature 70S chloroplast ribosomes of higher plants consist of a small (30S) and a large (50S) subunit. The 30S small subunit contains 1 molecule of ribosomal RNA (16S rRNA) and 24 different proteins. The 50S large subunit contains 3 rRNA molecules (23S, 5S and 4.5S rRNA) and 33 different proteins.

The protein resides in the plastid. The protein localises to the chloroplast. In terms of biological role, component of the chloroplast ribosome (chloro-ribosome), a dedicated translation machinery responsible for the synthesis of chloroplast genome-encoded proteins, including proteins of the transcription and translation machinery and components of the photosynthetic apparatus. In Spinacia oleracea (Spinach), this protein is Small ribosomal subunit protein uS8c (rps8).